A 340-amino-acid chain; its full sequence is Biotin synthase (340 aa).

One can recognise a Radical SAM core domain in the interval 47–269 (SELQLSQLLS…VAVARIVCPK (223 aa)). [4Fe-4S] cluster contacts are provided by C62, C66, and C69. The [2Fe-2S] cluster site is built by C106, C137, C197, and R273.

This sequence belongs to the radical SAM superfamily. Biotin synthase family. Homodimer. The cofactor is [4Fe-4S] cluster. Requires [2Fe-2S] cluster as cofactor.

The enzyme catalyses (4R,5S)-dethiobiotin + (sulfur carrier)-SH + 2 reduced [2Fe-2S]-[ferredoxin] + 2 S-adenosyl-L-methionine = (sulfur carrier)-H + biotin + 2 5'-deoxyadenosine + 2 L-methionine + 2 oxidized [2Fe-2S]-[ferredoxin]. Its pathway is cofactor biosynthesis; biotin biosynthesis; biotin from 7,8-diaminononanoate: step 2/2. Its function is as follows. Catalyzes the conversion of dethiobiotin (DTB) to biotin by the insertion of a sulfur atom into dethiobiotin via a radical-based mechanism. The protein is Biotin synthase of Caulobacter sp. (strain K31).